Here is a 501-residue protein sequence, read N- to C-terminus: Glycerol kinase (501 aa).

Position 12 (Thr-12) interacts with ADP. Residues Thr-12, Thr-13, and Ser-14 each contribute to the ATP site. Thr-12 contributes to the sn-glycerol 3-phosphate binding site. Residue Arg-16 coordinates ADP. Sn-glycerol 3-phosphate is bound by residues Arg-82, Glu-83, Tyr-134, and Asp-244. Arg-82, Glu-83, Tyr-134, Asp-244, and Gln-245 together coordinate glycerol. ADP is bound by residues Thr-266 and Gly-310. ATP-binding residues include Thr-266, Gly-310, Gln-314, and Gly-411. 2 residues coordinate ADP: Gly-411 and Asn-415.

Belongs to the FGGY kinase family.

The enzyme catalyses glycerol + ATP = sn-glycerol 3-phosphate + ADP + H(+). Its pathway is polyol metabolism; glycerol degradation via glycerol kinase pathway; sn-glycerol 3-phosphate from glycerol: step 1/1. With respect to regulation, inhibited by fructose 1,6-bisphosphate (FBP). In terms of biological role, key enzyme in the regulation of glycerol uptake and metabolism. Catalyzes the phosphorylation of glycerol to yield sn-glycerol 3-phosphate. The polypeptide is Glycerol kinase (Methylobacterium radiotolerans (strain ATCC 27329 / DSM 1819 / JCM 2831 / NBRC 15690 / NCIMB 10815 / 0-1)).